The sequence spans 340 residues: MADLKAKFLNVYSVLKSELLQDPAFEFTDISRQWVERMTDYNVPGGKLNRGLSVIDSYKLLKGEELTEEEIFLASALGWCIEWLQAYFLVLDDIMDNSHTRRGQPCWYKVPKVGMIAANDGVLLRNHIFRILKNHFKDKPYYVDLLDLFNEVEFQTASGQMLDLISSEGENDLSKFSLSLHRRIVQYKTAYYSFYLSVACALLMSGENLEDHVDVKNILVQMGIYFQVQDDYLDCFVDPKILGKIGTDIEDFKCSWLVVKALELSNEEQKKILNENYGKADPEKVAKVKALYKELDLEGEFADYESKSYEKLITSIESHPSKAVQAVLKSFLGKIYKRQK.

3 residues coordinate isopentenyl diphosphate: K47, R50, and Q85. 2 residues coordinate Mg(2+): D92 and D96. Residue R101 participates in dimethylallyl diphosphate binding. Residue R102 participates in isopentenyl diphosphate binding. Dimethylallyl diphosphate-binding residues include K188, T189, Q227, K244, and K253.

The protein belongs to the FPP/GGPP synthase family. The cofactor is Mg(2+). As to expression, mainly expressed in trichomes and flowers, and, to a lower extent, in leaves, roots and stems.

The protein resides in the cytoplasm. It is found in the nucleus. It catalyses the reaction isopentenyl diphosphate + dimethylallyl diphosphate = (2E)-geranyl diphosphate + diphosphate. The catalysed reaction is isopentenyl diphosphate + (2E)-geranyl diphosphate = (2E,6E)-farnesyl diphosphate + diphosphate. Its pathway is isoprenoid biosynthesis; farnesyl diphosphate biosynthesis; farnesyl diphosphate from geranyl diphosphate and isopentenyl diphosphate: step 1/1. The protein operates within sesquiterpene biosynthesis. It participates in isoprenoid biosynthesis; geranyl diphosphate biosynthesis; geranyl diphosphate from dimethylallyl diphosphate and isopentenyl diphosphate: step 1/1. Catalyzes the sequential condensation of isopentenyl pyrophosphate with the allylic pyrophosphates, dimethylallyl pyrophosphate, and then with the resultant geranylpyrophosphate to the ultimate product farnesyl pyrophosphate. This Cannabis sativa (Hemp) protein is Farnesyl pyrophosphate synthase 1.